The sequence spans 56 residues: Large ribosomal subunit protein bL32 (56 aa).

Residues 1–16 show a composition bias toward basic residues; that stretch reads MAVQKSKKSRAARGMR. Positions 1–22 are disordered; it reads MAVQKSKKSRAARGMRRSHDAL.

The protein belongs to the bacterial ribosomal protein bL32 family.

The protein is Large ribosomal subunit protein bL32 of Photobacterium profundum (strain SS9).